The chain runs to 353 residues: 3-dehydroquinate synthase (353 aa).

NAD(+) is bound by residues Ala-60–Lys-65, Gly-94–Asp-98, Thr-118–Thr-119, Lys-131, and Lys-140. Positions 173, 234, and 253 each coordinate Zn(2+).

It belongs to the sugar phosphate cyclases superfamily. Dehydroquinate synthase family. NAD(+) is required as a cofactor. Co(2+) serves as cofactor. The cofactor is Zn(2+).

The protein localises to the cytoplasm. It carries out the reaction 7-phospho-2-dehydro-3-deoxy-D-arabino-heptonate = 3-dehydroquinate + phosphate. It participates in metabolic intermediate biosynthesis; chorismate biosynthesis; chorismate from D-erythrose 4-phosphate and phosphoenolpyruvate: step 2/7. Functionally, catalyzes the conversion of 3-deoxy-D-arabino-heptulosonate 7-phosphate (DAHP) to dehydroquinate (DHQ). In Parabacteroides distasonis (strain ATCC 8503 / DSM 20701 / CIP 104284 / JCM 5825 / NCTC 11152), this protein is 3-dehydroquinate synthase.